The primary structure comprises 418 residues: Putative FBD-associated F-box protein At5g56560 (418 aa).

The F-box domain maps to 4–60 (QTRLSDLPDELLLKILSALPMFKVTLATRLISRRWKGPWKLVPDVTFDDDDIPFKSF). One can recognise an FBD domain in the interval 340 to 390 (LWEEPAVVAKCLSEHLEIFEWRQYEGTEQERNVAGYILANATCLKMATFST).

The polypeptide is Putative FBD-associated F-box protein At5g56560 (Arabidopsis thaliana (Mouse-ear cress)).